The chain runs to 195 residues: Nucleoside triphosphate pyrophosphatase (195 aa).

Aspartate 70 (proton acceptor) is an active-site residue.

The protein belongs to the Maf family. Requires a divalent metal cation as cofactor.

It is found in the cytoplasm. The catalysed reaction is a ribonucleoside 5'-triphosphate + H2O = a ribonucleoside 5'-phosphate + diphosphate + H(+). The enzyme catalyses a 2'-deoxyribonucleoside 5'-triphosphate + H2O = a 2'-deoxyribonucleoside 5'-phosphate + diphosphate + H(+). Functionally, nucleoside triphosphate pyrophosphatase. May have a dual role in cell division arrest and in preventing the incorporation of modified nucleotides into cellular nucleic acids. The sequence is that of Nucleoside triphosphate pyrophosphatase from Microcystis aeruginosa (strain NIES-843 / IAM M-2473).